A 697-amino-acid polypeptide reads, in one-letter code: Elongation factor G (697 aa).

The tr-type G domain occupies 6 to 281 (ENIRNIGICA…AVVDYLPSPI (276 aa)). Residues 15–22 (AHIDAGKT), 79–83 (DTPGH), and 133–136 (NKMD) each bind GTP.

Belongs to the TRAFAC class translation factor GTPase superfamily. Classic translation factor GTPase family. EF-G/EF-2 subfamily.

It is found in the cytoplasm. Catalyzes the GTP-dependent ribosomal translocation step during translation elongation. During this step, the ribosome changes from the pre-translocational (PRE) to the post-translocational (POST) state as the newly formed A-site-bound peptidyl-tRNA and P-site-bound deacylated tRNA move to the P and E sites, respectively. Catalyzes the coordinated movement of the two tRNA molecules, the mRNA and conformational changes in the ribosome. The protein is Elongation factor G of Rickettsia bellii (strain OSU 85-389).